A 285-amino-acid polypeptide reads, in one-letter code: NAD kinase (285 aa).

Residue D68 is the Proton acceptor of the active site. NAD(+) contacts are provided by residues 68-69 (DG), 142-143 (ND), R153, R170, D172, and Q242.

This sequence belongs to the NAD kinase family. The cofactor is a divalent metal cation.

It localises to the cytoplasm. The catalysed reaction is NAD(+) + ATP = ADP + NADP(+) + H(+). In terms of biological role, involved in the regulation of the intracellular balance of NAD and NADP, and is a key enzyme in the biosynthesis of NADP. Catalyzes specifically the phosphorylation on 2'-hydroxyl of the adenosine moiety of NAD to yield NADP. The protein is NAD kinase of Acidobacterium capsulatum (strain ATCC 51196 / DSM 11244 / BCRC 80197 / JCM 7670 / NBRC 15755 / NCIMB 13165 / 161).